Here is a 431-residue protein sequence, read N- to C-terminus: Serine--tRNA ligase (431 aa).

235-237 (TSE) is an L-serine binding site. 266-268 (RSE) is a binding site for ATP. Position 289 (E289) interacts with L-serine. ATP is bound at residue 353–356 (EISS). S388 serves as a coordination point for L-serine.

The protein belongs to the class-II aminoacyl-tRNA synthetase family. Type-1 seryl-tRNA synthetase subfamily. Homodimer. The tRNA molecule binds across the dimer.

The protein localises to the cytoplasm. The enzyme catalyses tRNA(Ser) + L-serine + ATP = L-seryl-tRNA(Ser) + AMP + diphosphate + H(+). It catalyses the reaction tRNA(Sec) + L-serine + ATP = L-seryl-tRNA(Sec) + AMP + diphosphate + H(+). It functions in the pathway aminoacyl-tRNA biosynthesis; selenocysteinyl-tRNA(Sec) biosynthesis; L-seryl-tRNA(Sec) from L-serine and tRNA(Sec): step 1/1. Its function is as follows. Catalyzes the attachment of serine to tRNA(Ser). Is also able to aminoacylate tRNA(Sec) with serine, to form the misacylated tRNA L-seryl-tRNA(Sec), which will be further converted into selenocysteinyl-tRNA(Sec). The chain is Serine--tRNA ligase from Paraburkholderia phytofirmans (strain DSM 17436 / LMG 22146 / PsJN) (Burkholderia phytofirmans).